We begin with the raw amino-acid sequence, 528 residues long: Ivanolysin (528 aa).

The signal sequence occupies residues 1 to 23; the sequence is MKKIMLLLMTLLLVSLPLAQEAQ. The next 4 membrane-spanning stretches (beta stranded) occupy residues 213–226, 233–242, 311–320, and 328–340; these read ESQL…AFKA, VNFGAISEGK, STRVKAAFDT, and KGDT…IQNA. The Conserved undecapeptide motif lies at 482-492; that stretch reads ECTGLAWEWWR. A Cholesterol binding motif is present at residues 514–515; the sequence is TL.

The protein belongs to the cholesterol-dependent cytolysin family. As to quaternary structure, homooligomeric pore complex of 35 to 50 subunits; when inserted in the host membrane.

The protein resides in the secreted. It is found in the host membrane. A cholesterol-dependent toxin that causes cytolysis by forming pores in cholesterol containing host membranes. After binding to target membranes, the protein undergoes a major conformation change, leading to its insertion in the host membrane and formation of an oligomeric pore complex. Cholesterol is required for binding to host membranes, membrane insertion and pore formation; cholesterol binding is mediated by a Thr-Leu pair in the C-terminus. Can be reversibly inactivated by oxidation. The polypeptide is Ivanolysin (ilo) (Listeria ivanovii).